Here is a 211-residue protein sequence, read N- to C-terminus: Small ribosomal subunit protein uS3 (211 aa).

The KH type-2 domain occupies 16-85 (IDEYFKTKLV…NPQIEVKQVE (70 aa)).

It belongs to the universal ribosomal protein uS3 family. Part of the 30S ribosomal subunit.

Functionally, binds the lower part of the 30S subunit head. This is Small ribosomal subunit protein uS3 from Methanococcus maripaludis (strain DSM 14266 / JCM 13030 / NBRC 101832 / S2 / LL).